The chain runs to 241 residues: Pyridoxine 5'-phosphate synthase (241 aa).

N7 provides a ligand contact to 3-amino-2-oxopropyl phosphate. Residue 9 to 10 coordinates 1-deoxy-D-xylulose 5-phosphate; that stretch reads DH. Residue R18 participates in 3-amino-2-oxopropyl phosphate binding. Catalysis depends on H43, which acts as the Proton acceptor. 2 residues coordinate 1-deoxy-D-xylulose 5-phosphate: R45 and H50. Catalysis depends on E70, which acts as the Proton acceptor. T100 is a 1-deoxy-D-xylulose 5-phosphate binding site. The active-site Proton donor is H191. Residues G192 and 213–214 contribute to the 3-amino-2-oxopropyl phosphate site; that span reads GH.

It belongs to the PNP synthase family. In terms of assembly, homooctamer; tetramer of dimers.

It localises to the cytoplasm. It carries out the reaction 3-amino-2-oxopropyl phosphate + 1-deoxy-D-xylulose 5-phosphate = pyridoxine 5'-phosphate + phosphate + 2 H2O + H(+). Its pathway is cofactor biosynthesis; pyridoxine 5'-phosphate biosynthesis; pyridoxine 5'-phosphate from D-erythrose 4-phosphate: step 5/5. Its function is as follows. Catalyzes the complicated ring closure reaction between the two acyclic compounds 1-deoxy-D-xylulose-5-phosphate (DXP) and 3-amino-2-oxopropyl phosphate (1-amino-acetone-3-phosphate or AAP) to form pyridoxine 5'-phosphate (PNP) and inorganic phosphate. The sequence is that of Pyridoxine 5'-phosphate synthase from Nitratidesulfovibrio vulgaris (strain ATCC 29579 / DSM 644 / CCUG 34227 / NCIMB 8303 / VKM B-1760 / Hildenborough) (Desulfovibrio vulgaris).